The following is a 97-amino-acid chain: UPF0298 protein MGAS9429_Spy0329 (97 aa).

Belongs to the UPF0298 family.

It localises to the cytoplasm. This Streptococcus pyogenes serotype M12 (strain MGAS9429) protein is UPF0298 protein MGAS9429_Spy0329.